The sequence spans 71 residues: Vitellogenin-A1 (71 aa).

A signal peptide spans methionine 1–serine 15. A Vitellogenin domain is found at phenylalanine 24–lysine 71.

Produced by the liver, secreted into the blood and then sequestered by receptor mediated endocytosis into growing oocytes, where it is generally cleaved, giving rise to the respective yolk components.

Its function is as follows. Precursor of the major egg-yolk proteins that are sources of nutrients during early development of oviparous organisms. This Xenopus laevis (African clawed frog) protein is Vitellogenin-A1.